The chain runs to 1225 residues: Cytosolic carboxypeptidase 1 (1225 aa).

The span at Asp-366–Asp-392 shows a compositional bias: acidic residues. Residues Asp-366–Asp-398 form a disordered region. The Peptidase M14 domain maps to Tyr-842–Lys-1132. Zn(2+) is bound by residues His-914, Glu-917, and His-1011. The Proton donor/acceptor role is filled by Glu-1096. A compositionally biased stretch (acidic residues) spans Tyr-1181 to Leu-1193. A disordered region spans residues Tyr-1181–Thr-1225.

This sequence belongs to the peptidase M14 family. It depends on Zn(2+) as a cofactor.

The protein resides in the cytoplasm. Its subcellular location is the cytosol. It is found in the nucleus. The protein localises to the mitochondrion. The enzyme catalyses (L-glutamyl)(n+1)-gamma-L-glutamyl-L-glutamyl-[protein] + H2O = (L-glutamyl)(n)-gamma-L-glutamyl-L-glutamyl-[protein] + L-glutamate. The catalysed reaction is C-terminal L-alpha-aminoacyl-L-glutamyl-L-glutamyl-[tubulin] + H2O = C-terminal L-alpha-aminoacyl-L-glutamyl-[tubulin] + L-glutamate. Functionally, metallocarboxypeptidase that mediates protein deglutamylation of tubulin and non-tubulin target proteins. Catalyzes the removal of polyglutamate side chains present on the gamma-carboxyl group of glutamate residues within the C-terminal tail of alpha- and beta-tubulin. Specifically cleaves tubulin long-side-chains, while it is not able to remove the branching point glutamate. Also catalyzes the removal of polyglutamate residues from the carboxy-terminus of alpha-tubulin as well as non-tubulin proteins. The protein is Cytosolic carboxypeptidase 1 (agtpbp1) of Xenopus laevis (African clawed frog).